We begin with the raw amino-acid sequence, 473 residues long: Photosystem II CP43 reaction center protein (473 aa).

Residues 1 to 14 constitute a propeptide that is removed on maturation; that stretch reads MKILYSLRRFYHVE. T15 is modified (N-acetylthreonine). The residue at position 15 (T15) is a Phosphothreonine. 5 consecutive transmembrane segments (helical) span residues 69–93, 134–155, 178–200, 255–275, and 291–312; these read LFEV…PHLA, LLGP…KDRN, KALY…RKIT, KPFA…LSYS, and WFNN…ASQA. [CaMn4O5] cluster is bound at residue E367. The helical transmembrane segment at 447-471 threads the bilayer; the sequence is RARAAAAGFEKGIDRDLEPVLYMTP.

The protein belongs to the PsbB/PsbC family. PsbC subfamily. As to quaternary structure, PSII is composed of 1 copy each of membrane proteins PsbA, PsbB, PsbC, PsbD, PsbE, PsbF, PsbH, PsbI, PsbJ, PsbK, PsbL, PsbM, PsbT, PsbX, PsbY, PsbZ, Psb30/Ycf12, at least 3 peripheral proteins of the oxygen-evolving complex and a large number of cofactors. It forms dimeric complexes. It depends on Binds multiple chlorophylls and provides some of the ligands for the Ca-4Mn-5O cluster of the oxygen-evolving complex. It may also provide a ligand for a Cl- that is required for oxygen evolution. PSII binds additional chlorophylls, carotenoids and specific lipids. as a cofactor.

It is found in the plastid. It localises to the chloroplast thylakoid membrane. In terms of biological role, one of the components of the core complex of photosystem II (PSII). It binds chlorophyll and helps catalyze the primary light-induced photochemical processes of PSII. PSII is a light-driven water:plastoquinone oxidoreductase, using light energy to abstract electrons from H(2)O, generating O(2) and a proton gradient subsequently used for ATP formation. This Saccharum hybrid (Sugarcane) protein is Photosystem II CP43 reaction center protein.